The chain runs to 241 residues: Homeobox protein TGIF2LX (241 aa).

2 disordered regions span residues 1 to 58 (MEAA…GNLP) and 127 to 207 (GKGA…ELVS). Residues 10 to 39 (ETQSPVQKDSPAKTQSPAQDTSIMSRNNAD) are compositionally biased toward polar residues. The homeobox; TALE-type DNA-binding region spans 48 to 111 (EHKKKRKGNL…INARRRILPD (64 aa)).

The protein belongs to the TALE/TGIF homeobox family.

It is found in the nucleus. In terms of biological role, may have a transcription role in testis. The protein is Homeobox protein TGIF2LX (TGIF2LX) of Pan paniscus (Pygmy chimpanzee).